An 84-amino-acid polypeptide reads, in one-letter code: FMRFamide-like neuropeptides 26 (84 aa).

Residues 1–19 (MKVMFMLALLFSSLVATSA) form the signal peptide. A propeptide spanning residues 20 to 48 (FRLPFQFFGANEDFNSGLTKRNYYESKPY) is cleaved from the precursor. Residues phenylalanine 61 and phenylalanine 82 each carry the phenylalanine amide modification.

This sequence belongs to the FARP (FMRFamide related peptide) family. Each flp gene is expressed in a distinct set of neurons.

It localises to the secreted. Functionally, FMRFamides and FMRFamide-like peptides are neuropeptides. This Caenorhabditis elegans protein is FMRFamide-like neuropeptides 26.